A 177-amino-acid chain; its full sequence is ATP synthase subunit delta (177 aa).

This sequence belongs to the ATPase delta chain family. As to quaternary structure, F-type ATPases have 2 components, F(1) - the catalytic core - and F(0) - the membrane proton channel. F(1) has five subunits: alpha(3), beta(3), gamma(1), delta(1), epsilon(1). F(0) has three main subunits: a(1), b(2) and c(10-14). The alpha and beta chains form an alternating ring which encloses part of the gamma chain. F(1) is attached to F(0) by a central stalk formed by the gamma and epsilon chains, while a peripheral stalk is formed by the delta and b chains.

The protein resides in the cell inner membrane. Functionally, f(1)F(0) ATP synthase produces ATP from ADP in the presence of a proton or sodium gradient. F-type ATPases consist of two structural domains, F(1) containing the extramembraneous catalytic core and F(0) containing the membrane proton channel, linked together by a central stalk and a peripheral stalk. During catalysis, ATP synthesis in the catalytic domain of F(1) is coupled via a rotary mechanism of the central stalk subunits to proton translocation. In terms of biological role, this protein is part of the stalk that links CF(0) to CF(1). It either transmits conformational changes from CF(0) to CF(1) or is implicated in proton conduction. In Leptothrix cholodnii (strain ATCC 51168 / LMG 8142 / SP-6) (Leptothrix discophora (strain SP-6)), this protein is ATP synthase subunit delta.